Consider the following 140-residue polypeptide: Cysteine desulfuration protein SufE (140 aa).

The active-site Cysteine persulfide intermediate is Cys51.

This sequence belongs to the SufE family. Homodimer. Interacts with SufS.

Its subcellular location is the cytoplasm. It participates in cofactor biosynthesis; iron-sulfur cluster biosynthesis. Functionally, participates in cysteine desulfuration mediated by SufS. Cysteine desulfuration mobilizes sulfur from L-cysteine to yield L-alanine and constitutes an essential step in sulfur metabolism for biosynthesis of a variety of sulfur-containing biomolecules. Functions as a sulfur acceptor for SufS, by mediating the direct transfer of the sulfur atom from the S-sulfanylcysteine of SufS, an intermediate product of cysteine desulfuration process. The protein is Cysteine desulfuration protein SufE of Yersinia pestis bv. Antiqua (strain Antiqua).